A 401-amino-acid polypeptide reads, in one-letter code: Phosphoglycerate kinase (401 aa).

Substrate-binding positions include D20 to N22, R35, H58 to R61, R117, and R154. Residues K204, G298, E329, and G358–S361 each bind ATP.

It belongs to the phosphoglycerate kinase family. In terms of assembly, monomer.

The protein resides in the cytoplasm. It carries out the reaction (2R)-3-phosphoglycerate + ATP = (2R)-3-phospho-glyceroyl phosphate + ADP. The protein operates within carbohydrate degradation; glycolysis; pyruvate from D-glyceraldehyde 3-phosphate: step 2/5. In Bifidobacterium longum (strain NCC 2705), this protein is Phosphoglycerate kinase.